We begin with the raw amino-acid sequence, 417 residues long: Bifunctional thiamine biosynthesis protein ThiDN (417 aa).

The tract at residues 1–235 (MVILAIGGYD…KSKFGYNSNP (235 aa)) is hydroxymethylpyrimidine/phosphomethylpyrimidine kinase. Residue glutamine 41 participates in 4-amino-5-hydroxymethyl-2-methylpyrimidine binding. The tract at residues 236–417 (TYINKEKVIK…VIQKIYNTLM (182 aa)) is thiamine-phosphate synthase.

This sequence in the N-terminal section; belongs to the ThiD family. In the C-terminal section; belongs to the ThiN family.

It carries out the reaction 4-amino-5-hydroxymethyl-2-methylpyrimidine + ATP = 4-amino-2-methyl-5-(phosphooxymethyl)pyrimidine + ADP + H(+). The enzyme catalyses 4-amino-2-methyl-5-(phosphooxymethyl)pyrimidine + ATP = 4-amino-2-methyl-5-(diphosphooxymethyl)pyrimidine + ADP. The catalysed reaction is 2-[(2R,5Z)-2-carboxy-4-methylthiazol-5(2H)-ylidene]ethyl phosphate + 4-amino-2-methyl-5-(diphosphooxymethyl)pyrimidine + 2 H(+) = thiamine phosphate + CO2 + diphosphate. It catalyses the reaction 2-(2-carboxy-4-methylthiazol-5-yl)ethyl phosphate + 4-amino-2-methyl-5-(diphosphooxymethyl)pyrimidine + 2 H(+) = thiamine phosphate + CO2 + diphosphate. It carries out the reaction 4-methyl-5-(2-phosphooxyethyl)-thiazole + 4-amino-2-methyl-5-(diphosphooxymethyl)pyrimidine + H(+) = thiamine phosphate + diphosphate. It functions in the pathway cofactor biosynthesis; thiamine diphosphate biosynthesis; 4-amino-2-methyl-5-diphosphomethylpyrimidine from 5-amino-1-(5-phospho-D-ribosyl)imidazole. Its pathway is cofactor biosynthesis; thiamine diphosphate biosynthesis; thiamine phosphate from 4-amino-2-methyl-5-diphosphomethylpyrimidine and 4-methyl-5-(2-phosphoethyl)-thiazole: step 1/1. In terms of biological role, catalyzes the phosphorylation of hydroxymethylpyrimidine phosphate (HMP-P) to HMP-PP, and of HMP to HMP-P. Its function is as follows. Condenses 4-methyl-5-(beta-hydroxyethyl)thiazole monophosphate (THZ-P) and 4-amino-5-hydroxymethyl pyrimidine pyrophosphate (HMP-PP) to form thiamine monophosphate (TMP). The polypeptide is Bifunctional thiamine biosynthesis protein ThiDN (thiDN) (Methanocaldococcus jannaschii (strain ATCC 43067 / DSM 2661 / JAL-1 / JCM 10045 / NBRC 100440) (Methanococcus jannaschii)).